The primary structure comprises 320 residues: Lipoyl synthase (320 aa).

Residues Cys67, Cys72, Cys78, Cys93, Cys97, Cys100, and Ser307 each contribute to the [4Fe-4S] cluster site. A Radical SAM core domain is found at 79–296; the sequence is FNHGTATFMI…RDKANEMGFE (218 aa).

It belongs to the radical SAM superfamily. Lipoyl synthase family. [4Fe-4S] cluster is required as a cofactor.

Its subcellular location is the cytoplasm. The catalysed reaction is [[Fe-S] cluster scaffold protein carrying a second [4Fe-4S](2+) cluster] + N(6)-octanoyl-L-lysyl-[protein] + 2 oxidized [2Fe-2S]-[ferredoxin] + 2 S-adenosyl-L-methionine + 4 H(+) = [[Fe-S] cluster scaffold protein] + N(6)-[(R)-dihydrolipoyl]-L-lysyl-[protein] + 4 Fe(3+) + 2 hydrogen sulfide + 2 5'-deoxyadenosine + 2 L-methionine + 2 reduced [2Fe-2S]-[ferredoxin]. It functions in the pathway protein modification; protein lipoylation via endogenous pathway; protein N(6)-(lipoyl)lysine from octanoyl-[acyl-carrier-protein]: step 2/2. Functionally, catalyzes the radical-mediated insertion of two sulfur atoms into the C-6 and C-8 positions of the octanoyl moiety bound to the lipoyl domains of lipoate-dependent enzymes, thereby converting the octanoylated domains into lipoylated derivatives. The chain is Lipoyl synthase from Haemophilus influenzae (strain ATCC 51907 / DSM 11121 / KW20 / Rd).